Consider the following 316-residue polypeptide: Homoserine kinase (316 aa).

96–106 is a binding site for ATP; sequence PHGRGLGSSGA.

Belongs to the GHMP kinase family. Homoserine kinase subfamily.

Its subcellular location is the cytoplasm. The catalysed reaction is L-homoserine + ATP = O-phospho-L-homoserine + ADP + H(+). The protein operates within amino-acid biosynthesis; L-threonine biosynthesis; L-threonine from L-aspartate: step 4/5. Functionally, catalyzes the ATP-dependent phosphorylation of L-homoserine to L-homoserine phosphate. The polypeptide is Homoserine kinase (Clavibacter michiganensis subsp. michiganensis (strain NCPPB 382)).